A 1079-amino-acid polypeptide reads, in one-letter code: Psi-producing oxygenase A (1079 aa).

The linoleate 8R-lipoxygenase stretch occupies residues 105-446 (TNTFLTTLWN…DGSYDDNDLV (342 aa)). Histidine 202 lines the heme b pocket. The active site involves tyrosine 374. Residue histidine 377 participates in heme b binding. The segment at 654–1079 (QFINSHSACM…WDGDLPEVKE (426 aa)) is 9,12-octadecadienoate 8-hydroperoxide 8R-isomerase.

This sequence belongs to the peroxidase family. Homotetramer. It depends on heme b as a cofactor.

The catalysed reaction is (9Z,12Z)-octadecadienoate + O2 = (8R,9Z,12Z)-8-hydroperoxyoctadeca-9,12-dienoate. It carries out the reaction (8R,9Z,12Z)-8-hydroperoxyoctadeca-9,12-dienoate = (5S,8R,9Z,12Z)-5,8-dihydroxyoctadeca-9,12-dienoate. Bifunctional heme-containing enzyme that oxidizes linoleic acid to (8R,9Z,12Z)-8-hydroperoxyoctadeca-9,12-dienoate (within the N-terminal heme peroxidase domain), which is subsequently isomerized to (5S,8R,9Z,12Z)-5,8-dihydroxyoctadeca-9,12-dienoate (within the C-terminal P450 heme thiolate domain). Oxidized unsaturated fatty acids, so-called oxylipins, derived from endogenous fatty acids, influence the development of the asexual conidiophores and sexual cleistothecia and regulate the secondary metabolism. These substances were collectively named psi factors and are primarily a mixture of hydroxylated oleic, linoleic and alpha-linolenic acids. They are termed psi-beta, psi-alpha, and psi-gamma, respectively. Oxylipins may also serve as activators of mammalian immune responses contributing to enhanced resistance to opportunistic fungi and as factors that modulate fungal development contributing to resistance to host defenses. The protein is Psi-producing oxygenase A (ppoA) of Aspergillus fumigatus (strain ATCC MYA-4609 / CBS 101355 / FGSC A1100 / Af293) (Neosartorya fumigata).